Here is a 300-residue protein sequence, read N- to C-terminus: Acyl-CoA-binding domain-containing protein 6 (300 aa).

The segment covering Met1–Asp19 has biased composition (low complexity). Residues Met1–Lys43 form a disordered region. One can recognise an ACB domain in the interval Leu60–Gln145. An acyl-CoA contacts are provided by residues Tyr87 to Lys91, Lys113, and Tyr132. The tract at residues Glu142 to Pro162 is disordered. Positions Ser147–Thr157 are enriched in basic and acidic residues. ANK repeat units follow at residues Glu209 to Ser238 and Glu242 to Ile271. A disordered region spans residues Ser270 to Gly300. Over residues Glu284–Arg293 the composition is skewed to polar residues.

As to expression, higly expressed in the central nervous system, developing eyes, otic vesicle, and trunk muscles.

Its subcellular location is the cytoplasm. The protein localises to the nucleus. In terms of biological role, binds long-chain acyl-coenzyme A molecules with a strong preference for unsaturated C18:1-CoA. Does not bind fatty acids. Plays a role in protein N-myristoylation. This Danio rerio (Zebrafish) protein is Acyl-CoA-binding domain-containing protein 6 (acbd6).